We begin with the raw amino-acid sequence, 2181 residues long: Non-reducing polyketide synthase dpmaA (2181 aa).

Residues 74-180 (QWVKGNSTQP…LALCCGAYID (107 aa)) are N-terminal acylcarrier protein transacylase domain (SAT). In terms of domain architecture, Ketosynthase family 3 (KS3) spans 347–779 (QAQLLVLGPV…GTNAAMLVCQ (433 aa)). Active-site for beta-ketoacyl synthase activity residues include cysteine 525, histidine 661, and histidine 702. The interval 891-1193 (VLAGQTGRRV…SFYPAALGEP (303 aa)) is malonyl-CoA:ACP transacylase (MAT) domain. The For acyl/malonyl transferase activity role is filled by serine 977. The segment at 1269 to 1401 (VSLIGKTQNA…GVITLQEVYS (133 aa)) is N-terminal hotdog fold. Residues 1269-1579 (VSLIGKTQNA…FQKIAISSLK (311 aa)) enclose the PKS/mFAS DH domain. Residues 1276–1573 (QNAGVQTVEY…TILGAKFQKI (298 aa)) are product template (PT) domain. Residues 1425-1579 (SASVVQGDFI…FQKIAISSLK (155 aa)) form a C-terminal hotdog fold region. Residues 1587–1603 (GVPQTSGGRTPSSSITE) are compositionally biased toward polar residues. Disordered stretches follow at residues 1587-1618 (GVPQTSGGRTPSSSITEFISGDDASPCPPIPG) and 1652-1675 (ISGSSRSTSSSPPSLESRSQAMET). Positions 1653–1670 (SGSSRSTSSSPPSLESRS) are enriched in low complexity. The region spanning 1677–1753 (EITEGAGSAL…TLFHTIFPQQ (77 aa)) is the Carrier domain. Serine 1713 is modified (O-(pantetheine 4'-phosphoryl)serine). A methyltransferase (CMeT) domain region spans residues 1982 to 2164 (EFMNCLFSYN…QSGFDHIDWT (183 aa)).

It participates in secondary metabolite biosynthesis; terpenoid biosynthesis. In terms of biological role, non-reducing polyketide synthase; part of the gene cluster that mediates the biosynthesis of the diterpenoid pyrones subglutinols A and B. The first step of the pathway is the synthesis of the alpha-pyrone moiety by the polyketide synthase dpmaA via condensation of one acetyl-CoA starter unit with 3 malonyl-CoA units and 2 methylations. The alpha-pyrone is then combined with geranylgeranyl pyrophosphate (GGPP) formed by the GGPP synthase dpmaD through the action of the prenyltransferase dpmaC to yield a linear alpha-pyrone diterpenoid. Subsequent steps in the diterpenoid pyrone biosynthetic pathway involve the decalin core formation, which is initiated by the epoxidation of the C10-C11 olefin by the FAD-dependent oxidoreductase dpmaE, and is followed by a cyclization cascade catalyzed by the terpene cyclase dpmaB. The dehydrogenase dpmaF is then involved in tetrahydrofuran (THF) ring formation at the C5 unit to complete the formation of subglutinols A and B. The sequence is that of Non-reducing polyketide synthase dpmaA from Metarhizium anisopliae (Entomophthora anisopliae).